We begin with the raw amino-acid sequence, 430 residues long: Shufflon protein A' (430 aa).

A constant region region spans residues 1 to 361; that stretch reads MKKYDRGWAS…TGAILSCQSG (361 aa). Residues 362–430 are variable region; sequence TWGTIGGKLK…GCIASCVTLN (69 aa).

The protein is Shufflon protein A' of Escherichia coli.